A 171-amino-acid chain; its full sequence is Ribosome-binding factor A (171 aa).

The span at 120–132 shows a compositional bias: low complexity; that stretch reads AALAAAAQPAGDP. Residues 120–171 are disordered; it reads AALAAAAQPAGDPDPYKKPVDHTDDWDEDDEDDRDGDDAVDALDAAADVPRL. The span at 133 to 142 shows a compositional bias: basic and acidic residues; the sequence is DPYKKPVDHT. Residues 143–160 show a composition bias toward acidic residues; the sequence is DDWDEDDEDDRDGDDAVD. The span at 161–171 shows a compositional bias: low complexity; it reads ALDAAADVPRL.

The protein belongs to the RbfA family. In terms of assembly, monomer. Binds 30S ribosomal subunits, but not 50S ribosomal subunits or 70S ribosomes.

It localises to the cytoplasm. Its function is as follows. One of several proteins that assist in the late maturation steps of the functional core of the 30S ribosomal subunit. Associates with free 30S ribosomal subunits (but not with 30S subunits that are part of 70S ribosomes or polysomes). Required for efficient processing of 16S rRNA. May interact with the 5'-terminal helix region of 16S rRNA. The polypeptide is Ribosome-binding factor A (Kineococcus radiotolerans (strain ATCC BAA-149 / DSM 14245 / SRS30216)).